Reading from the N-terminus, the 467-residue chain is ATP synthase subunit beta (467 aa).

ATP is bound at residue Gly150–Thr157.

The protein belongs to the ATPase alpha/beta chains family. F-type ATPases have 2 components, CF(1) - the catalytic core - and CF(0) - the membrane proton channel. CF(1) has five subunits: alpha(3), beta(3), gamma(1), delta(1), epsilon(1). CF(0) has three main subunits: a(1), b(2) and c(9-12). The alpha and beta chains form an alternating ring which encloses part of the gamma chain. CF(1) is attached to CF(0) by a central stalk formed by the gamma and epsilon chains, while a peripheral stalk is formed by the delta and b chains.

Its subcellular location is the cell inner membrane. It catalyses the reaction ATP + H2O + 4 H(+)(in) = ADP + phosphate + 5 H(+)(out). Its function is as follows. Produces ATP from ADP in the presence of a proton gradient across the membrane. The catalytic sites are hosted primarily by the beta subunits. This chain is ATP synthase subunit beta, found in Vibrio vulnificus (strain YJ016).